A 68-amino-acid chain; its full sequence is uncharacterized protein (68 aa).

This is an uncharacterized protein from Homo sapiens (Human).